The following is a 193-amino-acid chain: Protein hunchback (193 aa).

Residues 18–31 show a composition bias toward basic residues; sequence HLHHHHAHHSHHRH. Disordered regions lie at residues 18–57 and 153–193; these read HLHHHHAHHSHHRHDSNSNSNASSPHQSPLPSPNPPSNTN and LTPP…KYMA. Residues 34-44 show a composition bias toward low complexity; the sequence is NSNSNASSPHQ. Residues 174 to 193 are compositionally biased toward basic and acidic residues; sequence EPEKEHDLMSNSSEDMKYMA.

The protein belongs to the hunchback C2H2-type zinc-finger protein family.

It localises to the nucleus. In terms of biological role, gap class segmentation protein that controls development of head structures. The chain is Protein hunchback (hb) from Drosophila petalopeza (Fruit fly).